Consider the following 399-residue polypeptide: 4-hydroxyphenylpyruvate dioxygenase (399 aa).

2 VOC domains span residues 23 to 166 (GYDH…LIER) and 197 to 355 (RIDH…LFTK). 3 residues coordinate Fe cation: H200, H283, and E366.

Belongs to the 4HPPD family. Fe cation serves as cofactor.

It carries out the reaction 3-(4-hydroxyphenyl)pyruvate + O2 = homogentisate + CO2. Its pathway is amino-acid degradation; L-phenylalanine degradation; acetoacetate and fumarate from L-phenylalanine: step 3/6. This is 4-hydroxyphenylpyruvate dioxygenase (TCRP) from Coccidioides posadasii (strain C735) (Valley fever fungus).